A 488-amino-acid polypeptide reads, in one-letter code: 3-octaprenyl-4-hydroxybenzoate carboxy-lyase (488 aa).

Residue Asn172 participates in Mn(2+) binding. Prenylated FMN is bound by residues 175–177 (IYR), 189–191 (RWL), and 194–195 (RG). Glu238 provides a ligand contact to Mn(2+). The active-site Proton donor is the Asp287.

This sequence belongs to the UbiD family. In terms of assembly, homohexamer. Requires prenylated FMN as cofactor. Mn(2+) serves as cofactor.

It is found in the cell membrane. The catalysed reaction is a 4-hydroxy-3-(all-trans-polyprenyl)benzoate + H(+) = a 2-(all-trans-polyprenyl)phenol + CO2. The protein operates within cofactor biosynthesis; ubiquinone biosynthesis. Functionally, catalyzes the decarboxylation of 3-octaprenyl-4-hydroxy benzoate to 2-octaprenylphenol, an intermediate step in ubiquinone biosynthesis. This Pseudomonas savastanoi pv. phaseolicola (strain 1448A / Race 6) (Pseudomonas syringae pv. phaseolicola (strain 1448A / Race 6)) protein is 3-octaprenyl-4-hydroxybenzoate carboxy-lyase.